The following is an 89-amino-acid chain: Small ribosomal subunit protein uS15 (89 aa).

Belongs to the universal ribosomal protein uS15 family. As to quaternary structure, part of the 30S ribosomal subunit. Forms a bridge to the 50S subunit in the 70S ribosome, contacting the 23S rRNA.

In terms of biological role, one of the primary rRNA binding proteins, it binds directly to 16S rRNA where it helps nucleate assembly of the platform of the 30S subunit by binding and bridging several RNA helices of the 16S rRNA. Functionally, forms an intersubunit bridge (bridge B4) with the 23S rRNA of the 50S subunit in the ribosome. This Staphylococcus carnosus (strain TM300) protein is Small ribosomal subunit protein uS15.